Reading from the N-terminus, the 341-residue chain is Platelet-activating factor receptor (341 aa).

Residues 1–16 (MEQNGSFRVDSEFRYT) lie on the Extracellular side of the membrane. Residue Asn4 is glycosylated (N-linked (GlcNAc...) asparagine). A helical membrane pass occupies residues 17–38 (LFPIVYSVIFVLGVVANGYVLW). Topologically, residues 39-54 (VFATLYPSKKLNEIKI) are cytoplasmic. A helical membrane pass occupies residues 55-74 (FMVNLTVADLLFLMTLPLWI). Residues 75–91 (VYYSNEGDWIVHKFLCN) are Extracellular-facing. A disulfide bridge links Cys90 with Cys173. The chain crosses the membrane as a helical span at residues 92-113 (LAGCLFFINTYCSVAFLGVITY). At 114–133 (NRYQAVAYPIKTAQATTRKR) the chain is on the cytoplasmic side. The chain crosses the membrane as a helical span at residues 134–155 (GITLSLVIWISIAATASYFLAT). At 156-184 (DSTNVVPKKDGSGNITRCFEHYEPYSVPI) the chain is on the extracellular side. An N-linked (GlcNAc...) asparagine glycan is attached at Asn169. The helical transmembrane segment at 185–205 (LVVHIFITSCFFLVFFLIFYC) threads the bilayer. Over 206–233 (NMVIIHTLLTRPVRQQRKPEVKRRALWM) the chain is Cytoplasmic. Residues 234-254 (VCTVLAVFVICFVPHHVVQLP) form a helical membrane-spanning segment. At 255 to 275 (WTLAELGYQTNFHQAINDAHQ) the chain is on the extracellular side. A helical membrane pass occupies residues 276–295 (ITLCLLSTNCVLDPVIYCFL). At 296 to 341 (TKKFRKHLSEKFYSMRSSRKCSRATSDTCTEVMMPANQTPVLPLKN) the chain is on the cytoplasmic side.

Belongs to the G-protein coupled receptor 1 family. Interacts with ARRB1. Present in almost all organs including spleen, small intestine, kidney, lung, liver and brain.

Its subcellular location is the cell membrane. Functionally, receptor for platelet activating factor, a chemotactic phospholipid mediator that possesses potent inflammatory, smooth-muscle contractile and hypotensive activity. Seems to mediate its action via a G protein that activates a phosphatidylinositol-calcium second messenger system. The sequence is that of Platelet-activating factor receptor (Ptafr) from Rattus norvegicus (Rat).